The following is a 442-amino-acid chain: 5'-deoxyadenosine deaminase (442 aa).

Zn(2+) contacts are provided by His72 and His74. 2 residues coordinate substrate: Glu101 and His193. His220 is a Zn(2+) binding site. 2 residues coordinate substrate: Glu223 and Asp309. Asp309 contacts Zn(2+).

Belongs to the metallo-dependent hydrolases superfamily. MTA/SAH deaminase family. As to quaternary structure, homotetramer. The cofactor is Zn(2+).

The enzyme catalyses 5'-deoxyadenosine + H2O + H(+) = 5'-deoxyinosine + NH4(+). It carries out the reaction S-adenosyl-L-homocysteine + H2O + H(+) = S-inosyl-L-homocysteine + NH4(+). It catalyses the reaction S-methyl-5'-thioadenosine + H2O + H(+) = S-methyl-5'-thioinosine + NH4(+). The catalysed reaction is adenosine + H2O + H(+) = inosine + NH4(+). Its pathway is amino-acid biosynthesis; S-adenosyl-L-methionine biosynthesis. Catalyzes the deamination of three SAM-derived enzymatic products, namely 5'-deoxyadenosine, S-adenosyl-L-homocysteine, and 5'-methylthioadenosine, to produce the inosine analogs. Can also deaminate adenosine. The preferred substrate for this enzyme is 5'-deoxyadenosine, but all these substrates are efficiently deaminated. Likely functions in a S-adenosyl-L-methionine (SAM) recycling pathway from S-adenosyl-L-homocysteine (SAH) produced from SAM-dependent methylation reactions. May also be involved in the recycling of 5'-deoxyadenosine, whereupon the 5'-deoxyribose moiety of 5'-deoxyinosine is further metabolized to deoxyhexoses used for the biosynthesis of aromatic amino acids in methanogens. This chain is 5'-deoxyadenosine deaminase, found in Methanoregula boonei (strain DSM 21154 / JCM 14090 / 6A8).